A 289-amino-acid chain; its full sequence is Growth hormone-regulated TBC protein 1 (289 aa).

In terms of domain architecture, Rab-GAP TBC spans 41-211 (LVILTKRAIK…RIWDCLFNEG (171 aa)).

In terms of biological role, may act as a GTPase-activating protein for Rab family protein(s). The chain is Growth hormone-regulated TBC protein 1 (Grtp1) from Rattus norvegicus (Rat).